Consider the following 428-residue polypeptide: Phosphoribosylamine--glycine ligase (428 aa).

Residues 109-316 (KDFLHRHGIP…LVELCLAALD (208 aa)) enclose the ATP-grasp domain. 135-196 (LRQVGAPVVV…EEFLTGEEAS (62 aa)) serves as a coordination point for ATP. A disordered region spans residues 211-235 (SSQDHKARDDGDRGPNTGGMGAYSP). The segment covering 213 to 223 (QDHKARDDGDR) has biased composition (basic and acidic residues). Glu286 and Asn288 together coordinate Mg(2+).

This sequence belongs to the GARS family. Requires Mg(2+) as cofactor. Mn(2+) is required as a cofactor.

The enzyme catalyses 5-phospho-beta-D-ribosylamine + glycine + ATP = N(1)-(5-phospho-beta-D-ribosyl)glycinamide + ADP + phosphate + H(+). It functions in the pathway purine metabolism; IMP biosynthesis via de novo pathway; N(1)-(5-phospho-D-ribosyl)glycinamide from 5-phospho-alpha-D-ribose 1-diphosphate: step 2/2. This Allochromatium vinosum (strain ATCC 17899 / DSM 180 / NBRC 103801 / NCIMB 10441 / D) (Chromatium vinosum) protein is Phosphoribosylamine--glycine ligase (purD).